Consider the following 330-residue polypeptide: Aspartate--ammonia ligase (330 aa).

The protein belongs to the class-II aminoacyl-tRNA synthetase family. AsnA subfamily.

It localises to the cytoplasm. The enzyme catalyses L-aspartate + NH4(+) + ATP = L-asparagine + AMP + diphosphate + H(+). Its pathway is amino-acid biosynthesis; L-asparagine biosynthesis; L-asparagine from L-aspartate (ammonia route): step 1/1. The polypeptide is Aspartate--ammonia ligase (Histophilus somni (strain 2336) (Haemophilus somnus)).